The primary structure comprises 403 residues: Microtubule-associated protein tau (403 aa).

Over residues 1-32 the composition is skewed to basic and acidic residues; the sequence is MAEPRQEFDVMEDHAQGDYTLQDHEGDMEPGL. The disordered stretch occupies residues 1–219; it reads MAEPRQEFDV…GPMPDLKNVK (219 aa). Alanine 2 carries the N-acetylalanine modification. Residue tyrosine 19 is modified to Phosphotyrosine. Lysine 33 is covalently cross-linked (Glycyl lysine isopeptide (Lys-Gly) (interchain with G-Cter in ubiquitin)). Phosphoserine occurs at positions 35 and 50. A compositionally biased stretch (polar residues) spans 50 to 60; sequence SETSDAKSTPT. 3 positions are modified to phosphothreonine: threonine 58, threonine 60, and threonine 71. Residues 90-106 show a composition bias toward basic and acidic residues; it reads KGKDGTGPDDKKAKGAD. The residue at position 115 (threonine 115) is a Phosphothreonine. Arginine 117 bears the Omega-N-methylarginine mark. An N6,N6-dimethyllysine; alternate modification is found at lysine 125. Lysine 125 is subject to N6-acetyllysine; alternate. 4 positions are modified to phosphothreonine: threonine 131, threonine 137, threonine 138, and threonine 143. Low complexity predominate over residues 136-147; it reads KTTPTPKTSPGT. Serine 153 and serine 157 each carry phosphoserine. Positions 156–176 are enriched in low complexity; sequence RSGYSSPGSPGTPGSRSRTPS. Phosphotyrosine is present on tyrosine 159. 3 positions are modified to phosphoserine: serine 160, serine 161, and serine 164. Phosphothreonine occurs at positions 167 and 174. A Phosphoserine modification is found at serine 176. Threonine 179 carries the phosphothreonine modification. Lysine 187 is subject to N6-acetyllysine. Threonine 193 bears the Phosphothreonine mark. 2 positions are modified to phosphoserine: serine 197 and serine 199. Tau/MAP repeat units lie at residues 206–236, 237–267, 268–298, and 299–330; these read QAAP…GGGK, VQII…GGGS, VQIV…GGGQ, and VEVK…GGGN. Residue lysine 216 forms a Glycyl lysine isopeptide (Lys-Gly) (interchain with G-Cter in ubiquitin) linkage. Lysine 221 is subject to N6-acetyllysine; alternate. Lysine 221 is subject to N6-methyllysine; alternate. A Glycyl lysine isopeptide (Lys-Gly) (interchain with G-Cter in ubiquitin); alternate cross-link involves residue lysine 221. Serine 224 is modified (phosphoserine). Residue lysine 229 forms a Glycyl lysine isopeptide (Lys-Gly) (interchain with G-Cter in ubiquitin) linkage. Position 243 is an N6-acetyllysine; alternate (lysine 243). Lysine 243 participates in a covalent cross-link: Glycyl lysine isopeptide (Lys-Gly) (interchain with G-Cter in ubiquitin); alternate. Serine 247 and serine 251 each carry phosphoserine. An N6-acetyllysine modification is found at lysine 252. Cysteines 253 and 284 form a disulfide. Residue serine 255 is modified to Phosphoserine. Lysine 260 bears the N6-acetyllysine; alternate mark. A Glycyl lysine isopeptide (Lys-Gly) (interchain with G-Cter in ubiquitin); alternate cross-link involves residue lysine 260. Residue serine 267 is modified to Phosphoserine. Lysine 273 carries the N6,N6-dimethyllysine; alternate modification. Residues lysine 273, lysine 279, and lysine 283 each carry the N6-acetyllysine; alternate modification. Residues lysine 273, lysine 279, and lysine 283 each participate in a glycyl lysine isopeptide (Lys-Gly) (interchain with G-Cter in ubiquitin); alternate cross-link. A Phosphoserine modification is found at serine 286. 3 positions are modified to N6-acetyllysine; alternate: lysine 293, lysine 305, and lysine 309. Residues lysine 293, lysine 305, and lysine 309 each participate in a glycyl lysine isopeptide (Lys-Gly) (interchain with G-Cter in ubiquitin); alternate cross-link. The residue at position 311 (arginine 311) is an Omega-N-methylarginine. Serine 314 carries the phosphoserine modification. Residue lysine 315 forms a Glycyl lysine isopeptide (Lys-Gly) (interchain with G-Cter in ubiquitin) linkage. Position 318 is a phosphoserine (serine 318). Lysine 331 is subject to N6-acetyllysine; alternate. A Glycyl lysine isopeptide (Lys-Gly) (interchain with G-Cter in ubiquitin); alternate cross-link involves residue lysine 331. Lysine 337 is covalently cross-linked (Glycyl lysine isopeptide (Lys-Gly) (interchain with G-Cter in ubiquitin)). The residue at position 347 (lysine 347) is an N6-acetyllysine; alternate. A Glycyl lysine isopeptide (Lys-Gly) (interchain with G-Cter in ubiquitin); alternate cross-link involves residue lysine 347. Phosphotyrosine is present on tyrosine 356. Phosphoserine is present on residues serine 358 and serine 362. The interval 360 to 379 is disordered; sequence VVSGDTSPRHLSNVSSTGSI. Polar residues predominate over residues 363 to 378; it reads GDTSPRHLSNVSSTGS. Threonine 365 bears the Phosphothreonine mark. Phosphoserine is present on residues serine 366, serine 371, serine 378, and serine 384. Threonine 389 is modified (phosphothreonine).

In terms of assembly, interacts with MARK1, MARK2, MARK3 and MARK4. Interacts with SQSTM1 when polyubiquitinated. Interacts with PSMC2 through SQSTM1. Interacts with FKBP4. Binds to CSNK1D. Interacts with SGK1. Interacts with PIN1. Interacts with LRRK2. Interacts with LRP1, leading to endocytosis; this interaction is reduced in the presence of LRPAP1/RAP. Post-translationally, polyubiquitinated. Requires functional TRAF6 and may provoke SQSTM1-dependent degradation by the proteasome. In terms of processing, phosphorylation at various serine and threonine residues in S-P or T-P motifs by proline-directed protein kinases (PDPK1, CDK1, CDK5, GSK3, MAPK) (a few sites per protein in interphase, more in mitosis), and at serine residues in K-X-G-S motifs by MAP/microtubule affinity-regulating kinase (MARK1, MARK2, MARK3, MARK4), causing detachment from microtubules, and their disassembly. Phosphorylation at Ser-224 by BRSK1 and BRSK2 in neurons affects ability to bind microtubules and plays a role in neuron polarization. Phosphorylated by PHK. Dephosphorylation at several serine and threonine residues by the serine/threonine phosphatase PPP5C. Expressed in neurons.

The protein resides in the cytoplasm. It is found in the cytosol. Its subcellular location is the cell membrane. The protein localises to the cytoskeleton. It localises to the cell projection. The protein resides in the axon. It is found in the dendrite. Its function is as follows. Promotes microtubule assembly and stability, and might be involved in the establishment and maintenance of neuronal polarity. The C-terminus binds axonal microtubules while the N-terminus binds neural plasma membrane components, suggesting that tau functions as a linker protein between both. Axonal polarity is predetermined by tau localization (in the neuronal cell) in the domain of the cell body defined by the centrosome. The short isoforms allow plasticity of the cytoskeleton whereas the longer isoforms may preferentially play a role in its stabilization. This chain is Microtubule-associated protein tau (MAPT), found in Capra hircus (Goat).